Here is a 351-residue protein sequence, read N- to C-terminus: Sulfate/thiosulfate import ATP-binding protein CysA (351 aa).

One can recognise an ABC transporter domain in the interval 3-237 (ITVRNLHKRF…PRSAFVYEFL (235 aa)). 35 to 42 (GPSGCGKT) lines the ATP pocket.

It belongs to the ABC transporter superfamily. Sulfate/tungstate importer (TC 3.A.1.6) family. In terms of assembly, the complex is composed of two ATP-binding proteins (CysA), two transmembrane proteins (CysT and CysW) and a solute-binding protein (CysP).

The protein localises to the cell inner membrane. It catalyses the reaction sulfate(out) + ATP + H2O = sulfate(in) + ADP + phosphate + H(+). The catalysed reaction is thiosulfate(out) + ATP + H2O = thiosulfate(in) + ADP + phosphate + H(+). In terms of biological role, part of the ABC transporter complex CysAWTP involved in sulfate/thiosulfate import. Responsible for energy coupling to the transport system. In Burkholderia mallei (strain ATCC 23344), this protein is Sulfate/thiosulfate import ATP-binding protein CysA.